The primary structure comprises 169 residues: Transmembrane protein B169L (169 aa).

Helical transmembrane passes span 28 to 48 (NPFI…FAIC) and 60 to 80 (TAIY…YVLN). A glycan (N-linked (GlcNAc...) asparagine; by host) is linked at Asn-88. Residues 107–169 (DEIIPPISPP…EVIMPSQYNN (63 aa)) form a disordered region. Residues 140 to 154 (KPADSKPASSADSKP) show a composition bias toward low complexity.

Belongs to the asfivirus B169L family.

Its subcellular location is the host membrane. The protein localises to the virion. This Ornithodoros (relapsing fever ticks) protein is Transmembrane protein B169L.